Here is a 206-residue protein sequence, read N- to C-terminus: Platelet glycoprotein Ib beta chain (206 aa).

A signal peptide spans 1–26 (MGSRPRGALSLLLLLLALLSRPASGC). Intrachain disulfides connect Cys26/Cys32 and Cys30/Cys39. The 29-residue stretch at 27-55 (PAPCSCAGTLVDCGRRGLTWASLPAAFPP) folds into the LRRNT domain. Residues 27 to 147 (PAPCSCAGTL…RAACAPGLLC (121 aa)) are Extracellular-facing. The stretch at 60-83 (LVLTGNNLTALPPGLLDALPALRA) is one LRR repeat. Asn66 is a glycosylation site (N-linked (GlcNAc...) asparagine). An LRRCT domain is found at 89-143 (NPWRCDCRLLPLRAWLAGRPERAPYRDLRCVAPPALRGRLLPYVAEDELRAACAP). 2 disulfide bridges follow: Cys93-Cys118 and Cys95-Cys141. A helical membrane pass occupies residues 148–172 (WGALVAQLALLVLGLLHALLLALLL). Over 173–206 (GRLRRLRARARARSIQEFSLTAPLVAESARGGAS) the chain is Cytoplasmic. Residues Ser186 and Ser191 each carry the phosphoserine modification. Thr193 carries the phosphothreonine modification. Ser200 carries the phosphoserine modification.

Two GP-Ib beta are disulfide-linked to one GP-Ib alpha. GP-IX is complexed with the GP-Ib heterodimer via a non covalent linkage. Interacts with TRAF4.

Its subcellular location is the membrane. Gp-Ib, a surface membrane protein of platelets, participates in the formation of platelet plugs by binding to von Willebrand factor, which is already bound to the subendothelium. The sequence is that of Platelet glycoprotein Ib beta chain (Gp1bb) from Mus musculus (Mouse).